Consider the following 96-residue polypeptide: MRVTSATCALLLALICSVQLGDACLDIDKLLANVVFDVSQDLLKEELARYNPSPLTEESFLNVQQCFANVSVTERFAHSVVIKKILQSNDCIEAAF.

An N-terminal signal peptide occupies residues 1–23 (MRVTSATCALLLALICSVQLGDA).

It belongs to the secretoglobin family.

It is found in the secreted. The polypeptide is Secretoglobin family 2B member 2 (SCGB2B2) (Homo sapiens (Human)).